The primary structure comprises 195 residues: Inner membrane-spanning protein YciB (195 aa).

A run of 5 helical transmembrane segments spans residues 34–54, 65–85, 88–108, 131–151, and 160–180; these read IYGATATLILASVIVYGALWL, FTLGACLVLGGLTLAFHEDTF, WKAPLVNWLFALAFAGSHFIG, LNIAWVVFFLVCGFANLYVVF, and FKVFGSLGMTLLFLIGQGIFL.

It belongs to the YciB family.

The protein resides in the cell inner membrane. Functionally, plays a role in cell envelope biogenesis, maintenance of cell envelope integrity and membrane homeostasis. The sequence is that of Inner membrane-spanning protein YciB from Pseudomonas paraeruginosa (strain DSM 24068 / PA7) (Pseudomonas aeruginosa (strain PA7)).